We begin with the raw amino-acid sequence, 131 residues long: DNA-directed RNA polymerase subunit omega (131 aa).

It belongs to the RNA polymerase subunit omega family. The RNAP catalytic core consists of 2 alpha, 1 beta, 1 beta' and 1 omega subunit. When a sigma factor is associated with the core the holoenzyme is formed, which can initiate transcription.

It carries out the reaction RNA(n) + a ribonucleoside 5'-triphosphate = RNA(n+1) + diphosphate. Functionally, promotes RNA polymerase assembly. Latches the N- and C-terminal regions of the beta' subunit thereby facilitating its interaction with the beta and alpha subunits. The chain is DNA-directed RNA polymerase subunit omega from Chelativorans sp. (strain BNC1).